Reading from the N-terminus, the 825-residue chain is Quinic acid utilization activator (825 aa).

Positions 1–12 are enriched in polar residues; the sequence is MSSDTRQTSGGN. A disordered region spans residues 1–45; it reads MSSDTRQTSGGNARSKRRLTDAVDEDGRPTATAEDPTSNPKRQRV. Positions 18–28 are enriched in basic and acidic residues; it reads RLTDAVDEDGR. Positions 49–76 form a DNA-binding region, zn(2)-C6 fungal-type; that stretch reads CDSCRSKKDKCDGAQPICSTCASLSRPC. Disordered regions lie at residues 160 to 186, 204 to 224, and 658 to 683; these read EQPEGDQERSARGEIDSPADAEESSVL, QSPLASGPSPVRLPRPSTTRL, and GSQRRPRHATQQGTHPRSPMAISLPG. Basic and acidic residues predominate over residues 165–174; it reads DQERSARGEI. Residues 658–672 are compositionally biased toward polar residues; it reads GSQRRPRHATQQGTH.

The protein resides in the nucleus. Transcription activation of genes for enzymes and proteins of quinate metabolism by binding to a 16 base-pair sequence (consensus 5'-GGATAANNNNTTATCC-3') in front of each qut gene. The sequence is that of Quinic acid utilization activator (qutA) from Emericella nidulans (strain FGSC A4 / ATCC 38163 / CBS 112.46 / NRRL 194 / M139) (Aspergillus nidulans).